A 173-amino-acid chain; its full sequence is UPF0316 protein Bsph_0745 (173 aa).

The next 3 membrane-spanning stretches (helical) occupy residues 4–24, 31–51, and 58–78; these read IVLI…RTIF, FLAA…LSLV, and MLAM…GAKI.

It belongs to the UPF0316 family.

Its subcellular location is the cell membrane. The protein is UPF0316 protein Bsph_0745 of Lysinibacillus sphaericus (strain C3-41).